The following is a 247-amino-acid chain: Acidic 27 kDa endochitinase (247 aa).

A signal peptide spans 1–16 (MVLCCVFLLFLTGSFA). E84 serves as the catalytic Proton donor. Cysteines 206 and 238 form a disulfide.

This sequence belongs to the glycosyl hydrolase 19 family. Chitinase class II subfamily.

The protein localises to the secreted. It is found in the extracellular space. The enzyme catalyses Random endo-hydrolysis of N-acetyl-beta-D-glucosaminide (1-&gt;4)-beta-linkages in chitin and chitodextrins.. Functionally, defense against chitin-containing fungal pathogens. This is Acidic 27 kDa endochitinase (CHI17) from Solanum lycopersicum (Tomato).